The following is a 40-amino-acid chain: Photosystem II reaction center protein J (40 aa).

A helical transmembrane segment spans residues 8–28 (IPLWLIGTVTGIPVIGLIGIF).

The protein belongs to the PsbJ family. PSII is composed of 1 copy each of membrane proteins PsbA, PsbB, PsbC, PsbD, PsbE, PsbF, PsbH, PsbI, PsbJ, PsbK, PsbL, PsbM, PsbT, PsbX, PsbY, PsbZ, Psb30/Ycf12, at least 3 peripheral proteins of the oxygen-evolving complex and a large number of cofactors. It forms dimeric complexes.

It localises to the plastid. It is found in the chloroplast thylakoid membrane. In terms of biological role, one of the components of the core complex of photosystem II (PSII). PSII is a light-driven water:plastoquinone oxidoreductase that uses light energy to abstract electrons from H(2)O, generating O(2) and a proton gradient subsequently used for ATP formation. It consists of a core antenna complex that captures photons, and an electron transfer chain that converts photonic excitation into a charge separation. In Vitis vinifera (Grape), this protein is Photosystem II reaction center protein J.